The sequence spans 709 residues: Phosphate acetyltransferase (709 aa).

Residues 389–709 (EFCYRLKILS…TIALTSIQSL (321 aa)) are phosphate acetyltransferase.

It in the N-terminal section; belongs to the CobB/CobQ family. This sequence in the C-terminal section; belongs to the phosphate acetyltransferase and butyryltransferase family. Homohexamer.

It is found in the cytoplasm. It carries out the reaction acetyl-CoA + phosphate = acetyl phosphate + CoA. Its pathway is metabolic intermediate biosynthesis; acetyl-CoA biosynthesis; acetyl-CoA from acetate: step 2/2. In terms of biological role, involved in acetate metabolism. The chain is Phosphate acetyltransferase (pta) from Buchnera aphidicola subsp. Schizaphis graminum (strain Sg).